The primary structure comprises 154 residues: Large ribosomal subunit protein uL30 (154 aa).

Residues 114–139 (PTLRLHPPRGGHDGIKHPTKEGGQLG) are disordered. Basic and acidic residues predominate over residues 123–133 (GGHDGIKHPTK).

This sequence belongs to the universal ribosomal protein uL30 family. As to quaternary structure, part of the 50S ribosomal subunit.

This is Large ribosomal subunit protein uL30 from Natronomonas pharaonis (strain ATCC 35678 / DSM 2160 / CIP 103997 / JCM 8858 / NBRC 14720 / NCIMB 2260 / Gabara) (Halobacterium pharaonis).